The primary structure comprises 684 residues: Zinc finger BED domain-containing protein RICESLEEPER 4 (684 aa).

A BED-type zinc finger spans residues 54–113 (KRKSAIWEHFTLVDVSDGCKRASCIHCNQSLAYSSGSKNSGTSHLTRHIAEWCRVLKDRQ). Zn(2+) is bound by residues cysteine 77, cysteine 80, histidine 101, and cysteine 106. Residues 595–680 (ELELYLEEAL…EALLCAKDWL (86 aa)) are HATC (Hobo-Ac-Tam3) domain.

As to quaternary structure, homodimer.

The protein localises to the nucleus. Its function is as follows. Transposase-like protein that is essential for plant growth and development. May regulate global gene expression by recruiting other cellular factors. The sequence is that of Zinc finger BED domain-containing protein RICESLEEPER 4 from Oryza sativa subsp. japonica (Rice).